Consider the following 159-residue polypeptide: 2-C-methyl-D-erythritol 2,4-cyclodiphosphate synthase (159 aa).

A divalent metal cation contacts are provided by D10 and H12. 4-CDP-2-C-methyl-D-erythritol 2-phosphate is bound by residues 10–12 and 36–37; these read DVH and HS. H44 lines the a divalent metal cation pocket. 4-CDP-2-C-methyl-D-erythritol 2-phosphate contacts are provided by residues 58 to 60, 134 to 137, F141, and R144; these read DIG and TTSE.

It belongs to the IspF family. In terms of assembly, homotrimer. A divalent metal cation serves as cofactor.

It catalyses the reaction 4-CDP-2-C-methyl-D-erythritol 2-phosphate = 2-C-methyl-D-erythritol 2,4-cyclic diphosphate + CMP. It functions in the pathway isoprenoid biosynthesis; isopentenyl diphosphate biosynthesis via DXP pathway; isopentenyl diphosphate from 1-deoxy-D-xylulose 5-phosphate: step 4/6. Functionally, involved in the biosynthesis of isopentenyl diphosphate (IPP) and dimethylallyl diphosphate (DMAPP), two major building blocks of isoprenoid compounds. Catalyzes the conversion of 4-diphosphocytidyl-2-C-methyl-D-erythritol 2-phosphate (CDP-ME2P) to 2-C-methyl-D-erythritol 2,4-cyclodiphosphate (ME-CPP) with a corresponding release of cytidine 5-monophosphate (CMP). The protein is 2-C-methyl-D-erythritol 2,4-cyclodiphosphate synthase of Cereibacter sphaeroides (strain ATCC 17025 / ATH 2.4.3) (Rhodobacter sphaeroides).